The primary structure comprises 143 residues: ATP synthase F(0) complex subunit C2, mitochondrial (143 aa).

A mitochondrion-targeting transit peptide spans 1–68 (MYTCAKFVST…RSFQTSAISR (68 aa)). A helical transmembrane segment spans residues 84–104 (VGVAGSGAGIGTVFGSLIIGY). K111 is modified (N6,N6,N6-trimethyllysine). Residues 119-139 (ILGFALSEAMGLFCLMVAFLI) traverse the membrane as a helical segment.

Belongs to the ATPase C chain family. In terms of assembly, F-type ATPases have 2 components, CF(1) - the catalytic core - and CF(0) - the membrane proton channel. CF(1) has five subunits: alpha(3), beta(3), gamma(1), delta(1), epsilon(1). CF(0) has three main subunits: a, b and c. Interacts with DNAJC30; interaction is direct. In terms of processing, trimethylated by ATPSCKMT at Lys-111. Methylation is required for proper incorporation of the C subunit into the ATP synthase complex and mitochondrial respiration.

It is found in the mitochondrion membrane. In terms of biological role, mitochondrial membrane ATP synthase (F(1)F(0) ATP synthase or Complex V) produces ATP from ADP in the presence of a proton gradient across the membrane which is generated by electron transport complexes of the respiratory chain. F-type ATPases consist of two structural domains, F(1) - containing the extramembraneous catalytic core and F(0) - containing the membrane proton channel, linked together by a central stalk and a peripheral stalk. During catalysis, ATP synthesis in the catalytic domain of F(1) is coupled via a rotary mechanism of the central stalk subunits to proton translocation. Part of the complex F(0) domain. A homomeric c-ring of probably 10 subunits is part of the complex rotary element. This is ATP synthase F(0) complex subunit C2, mitochondrial from Ovis aries (Sheep).